Consider the following 438-residue polypeptide: Coenzyme A disulfide reductase (438 aa).

8-33 serves as a coordination point for FAD; it reads GAVAGGATCASQIRRLDKESDIIIFE. Residues T15, Q19, R22, S39, and N42 each coordinate substrate. C43 serves as the catalytic Nucleophile. C43 (redox-active) is an active-site residue. K71 serves as a coordination point for substrate. 151–166 contacts NADP(+); the sequence is VLVVGAGYVSLEVLEN. 267–277 provides a ligand contact to FAD; it reads TNVPNIYAIGD. H299 is a binding site for substrate. Y419 serves as a coordination point for FAD. K427 is a substrate binding site.

The protein belongs to the class-III pyridine nucleotide-disulfide oxidoreductase family. Homodimer. It depends on FAD as a cofactor.

It catalyses the reaction NADP(+) + 2 CoA = CoA-disulfide + NADPH + H(+). In terms of biological role, catalyzes specifically the NADPH-dependent reduction of coenzyme A disulfide. This Staphylococcus aureus (strain USA300) protein is Coenzyme A disulfide reductase.